The following is a 339-amino-acid chain: Uroporphyrinogen decarboxylase (339 aa).

Residues R21–R25, D71, Y147, S202, and H315 each bind substrate.

The protein belongs to the uroporphyrinogen decarboxylase family. As to quaternary structure, homodimer.

It is found in the cytoplasm. The catalysed reaction is uroporphyrinogen III + 4 H(+) = coproporphyrinogen III + 4 CO2. The protein operates within porphyrin-containing compound metabolism; protoporphyrin-IX biosynthesis; coproporphyrinogen-III from 5-aminolevulinate: step 4/4. Functionally, catalyzes the decarboxylation of four acetate groups of uroporphyrinogen-III to yield coproporphyrinogen-III. This chain is Uroporphyrinogen decarboxylase, found in Helicobacter pylori (strain HPAG1).